We begin with the raw amino-acid sequence, 412 residues long: Serine hydroxymethyltransferase (412 aa).

Residues Leu-117 and Gly-121–Leu-123 contribute to the (6S)-5,6,7,8-tetrahydrofolate site. Lys-226 is subject to N6-(pyridoxal phosphate)lysine. (6S)-5,6,7,8-tetrahydrofolate is bound at residue Ser-349 to Phe-351.

It belongs to the SHMT family. In terms of assembly, homodimer. Requires pyridoxal 5'-phosphate as cofactor.

The protein resides in the cytoplasm. The catalysed reaction is (6R)-5,10-methylene-5,6,7,8-tetrahydrofolate + glycine + H2O = (6S)-5,6,7,8-tetrahydrofolate + L-serine. The protein operates within one-carbon metabolism; tetrahydrofolate interconversion. It functions in the pathway amino-acid biosynthesis; glycine biosynthesis; glycine from L-serine: step 1/1. Its function is as follows. Catalyzes the reversible interconversion of serine and glycine with tetrahydrofolate (THF) serving as the one-carbon carrier. This reaction serves as the major source of one-carbon groups required for the biosynthesis of purines, thymidylate, methionine, and other important biomolecules. Also exhibits THF-independent aldolase activity toward beta-hydroxyamino acids, producing glycine and aldehydes, via a retro-aldol mechanism. The polypeptide is Serine hydroxymethyltransferase (Nitratidesulfovibrio vulgaris (strain DSM 19637 / Miyazaki F) (Desulfovibrio vulgaris)).